A 94-amino-acid polypeptide reads, in one-letter code: Small ribosomal subunit protein uS19 (94 aa).

The protein belongs to the universal ribosomal protein uS19 family.

Functionally, protein S19 forms a complex with S13 that binds strongly to the 16S ribosomal RNA. The chain is Small ribosomal subunit protein uS19 from Endomicrobium trichonymphae.